A 141-amino-acid polypeptide reads, in one-letter code: Large ribosomal subunit protein uL22 (141 aa).

Residues 110–141 (EEKKTVAKKTTTTKAPAKKTTSTKKATAKKES) form a disordered region. The span at 117–134 (KKTTTTKAPAKKTTSTKK) shows a compositional bias: low complexity.

Belongs to the universal ribosomal protein uL22 family. Part of the 50S ribosomal subunit.

Functionally, this protein binds specifically to 23S rRNA; its binding is stimulated by other ribosomal proteins, e.g. L4, L17, and L20. It is important during the early stages of 50S assembly. It makes multiple contacts with different domains of the 23S rRNA in the assembled 50S subunit and ribosome. In terms of biological role, the globular domain of the protein is located near the polypeptide exit tunnel on the outside of the subunit, while an extended beta-hairpin is found that lines the wall of the exit tunnel in the center of the 70S ribosome. The chain is Large ribosomal subunit protein uL22 from Campylobacter jejuni subsp. doylei (strain ATCC BAA-1458 / RM4099 / 269.97).